Consider the following 282-residue polypeptide: Trihydroxynaphthalene reductase (282 aa).

NADP(+)-binding residues include Ile41, Asn114, and Arg147. Residues Ser164 and Tyr178 each act as proton donor in the active site. Residues Tyr178, Lys182, Ile211, and Thr213 each contribute to the NADP(+) site. Lys182 (lowers pKa of active site Tyr) is an active-site residue.

Belongs to the short-chain dehydrogenases/reductases (SDR) family. As to quaternary structure, homotetramer.

The protein operates within pigment biosynthesis; melanin biosynthesis. Its function is as follows. Catalyzes the NADPH-dependent reduction of 1,3,8-trihydroxynaphthalene (T3HN) into (-)-vermelone. Essential for appressorial penetration of colletotrichum lagenarium. This is Trihydroxynaphthalene reductase (THR1) from Colletotrichum orbiculare (strain 104-T / ATCC 96160 / CBS 514.97 / LARS 414 / MAFF 240422) (Cucumber anthracnose fungus).